Reading from the N-terminus, the 259-residue chain is 2-oxoglutaramate amidase (259 aa).

In terms of domain architecture, CN hydrolase spans 3–238 (WTISCLQFDI…EGIVRAEIDL (236 aa)). Glu42 (proton acceptor) is an active-site residue. Lys111 (proton donor) is an active-site residue. The Nucleophile role is filled by Cys145.

The protein belongs to the carbon-nitrogen hydrolase superfamily. NIT1/NIT2 family.

The catalysed reaction is 2-oxoglutaramate + H2O = 2-oxoglutarate + NH4(+). Functionally, involved in the methylthioribose (MTR) recycling pathway. Probably catalyzes the conversion of 2-oxoglutaramate to 2-oxoglutarate. This chain is 2-oxoglutaramate amidase, found in Bacillus subtilis (strain 168).